A 329-amino-acid chain; its full sequence is uncharacterized protein (329 aa).

A disordered region spans residues Lys-109–Lys-147. Over residues Thr-116–Ser-131 the composition is skewed to low complexity.

To the C-terminal of MG321/MPN_456.

This is an uncharacterized protein from Mycoplasma pneumoniae (strain ATCC 29342 / M129 / Subtype 1) (Mycoplasmoides pneumoniae).